Consider the following 344-residue polypeptide: tRNA-specific 2-thiouridylase MnmA (344 aa).

ATP is bound by residues alanine 9–serine 16 and methionine 34. The active-site Nucleophile is the cysteine 92. Cysteine 92 and cysteine 188 are oxidised to a cystine. Glycine 116 contacts ATP. The interval lysine 138–glutamine 140 is interaction with tRNA. Catalysis depends on cysteine 188, which acts as the Cysteine persulfide intermediate.

The protein belongs to the MnmA/TRMU family.

The protein localises to the cytoplasm. It catalyses the reaction S-sulfanyl-L-cysteinyl-[protein] + uridine(34) in tRNA + AH2 + ATP = 2-thiouridine(34) in tRNA + L-cysteinyl-[protein] + A + AMP + diphosphate + H(+). Catalyzes the 2-thiolation of uridine at the wobble position (U34) of tRNA, leading to the formation of s(2)U34. The protein is tRNA-specific 2-thiouridylase MnmA of Desulfotalea psychrophila (strain LSv54 / DSM 12343).